A 44-amino-acid chain; its full sequence is QLCGRGFIRAIIFACGGSRWATSPAMSIKCCIYGCTKKDISVLC.

Pyrrolidone carboxylic acid is present on Gln1. 3 disulfides stabilise this stretch: Cys3/Cys31, Cys15/Cys44, and Cys30/Cys35.

It belongs to the insulin family. Heterodimer of a B chain and an A chain linked by two disulfide bonds.

The protein resides in the secreted. This chain is Relaxin, found in Carcharias taurus (Sand tiger shark).